Here is a 425-residue protein sequence, read N- to C-terminus: MERVFSVEEISDPFWVPPPPPQSAAAAQQQGGGGVASGGGGGVAGGGGGGNAMNRCPSEWYFQKFLEEAVLDSPVPNPSPRAEAGGIRGAGGVVPVDVKQPQLSAAAAAAATTSAVVDPVEYNAMLKQKLEKDLAAVAMWRASGTVPPERPGAGSSLLNADVSHIGAPNSIGGNATPVQNMLSGPSGGSGSQLVQNVDVLVKQPTSSSSREQSDDDDMEGEAETTGTARPADQRLQRRKQSNRESARRSRSRKAAHLNELEAQVSQLRVENSSLLRRLADVNQKYNDAAVDNRVLKADVETLRAKVKMAEDSVKRVTGMNALFPAASDMSSLSMPFNSSPSEATSDAAVPIQDDPNNYFATNNDIGGNNNYMPDIPSSAQEDEDFVNGALAAGKIGRTASLQRVASLEHLQKRMCGGPASSGSTS.

Disordered stretches follow at residues 1–50 (MERV…GGGG) and 169–257 (NSIG…AAHL). Positions 30 to 50 (QGGGGVASGGGGGVAGGGGGG) are enriched in gly residues. Residues 171-182 (IGGNATPVQNML) show a composition bias toward polar residues. The span at 213–222 (SDDDDMEGEA) shows a compositional bias: acidic residues. The span at 231–247 (ADQRLQRRKQSNRESAR) shows a compositional bias: basic and acidic residues. One can recognise a bZIP domain in the interval 232–295 (DQRLQRRKQS…NDAAVDNRVL (64 aa)). The tract at residues 234–253 (RLQRRKQSNRESARRSRSRK) is basic motif. Positions 260–274 (LEAQVSQLRVENSSL) are leucine-zipper. The segment at 334–354 (MPFNSSPSEATSDAAVPIQDD) is disordered.

Heterodimer with RISBZ1/BZIP58.

It is found in the nucleus. In terms of biological role, transcriptional activator that binds to the DNA specific sequence 5'-GCCACGT[AC]AG-3' found in the alpha-globulin gene promoter. Does not bind to promoters of other major storage genes such as glutelin, prolamin and albumin. Binds to the DNA specific sequence 5'-TGAGTCA-3' found in seed storage protein gene promoters. This chain is bZIP transcription factor RISBZ2, found in Oryza sativa subsp. japonica (Rice).